The following is a 143-amino-acid chain: MKPSFRRKARACALQVLYSWEISHNNIKESAIYFLKEKNKKNIDIVYFYELIIGITYDCKNIDNLMKPYLFRSLKELGHIERAILRISFYELHKRNDIPYKVSINEGIELAKLFGSEDSHKFINGVLDKAVFKMGYNKKVVIA.

Belongs to the NusB family.

Its function is as follows. Involved in transcription antitermination. Required for transcription of ribosomal RNA (rRNA) genes. Binds specifically to the boxA antiterminator sequence of the ribosomal RNA (rrn) operons. The protein is Transcription antitermination protein NusB of Buchnera aphidicola subsp. Acyrthosiphon pisum (strain APS) (Acyrthosiphon pisum symbiotic bacterium).